The primary structure comprises 253 residues: E3 ubiquitin-protein ligase MARCHF3 (253 aa).

The segment at serine 63–glutamate 123 adopts an RING-CH-type zinc-finger fold. Zn(2+) contacts are provided by cysteine 71, cysteine 74, cysteine 87, cysteine 89, histidine 97, cysteine 100, cysteine 113, and cysteine 116. A run of 2 helical transmembrane segments spans residues leucine 145–leucine 165 and alanine 182–valine 202. 2 positions are modified to phosphoserine: serine 237 and serine 243.

Interacts with MARCHF2 and STX6.

It localises to the cytoplasmic vesicle membrane. Its subcellular location is the early endosome membrane. It catalyses the reaction S-ubiquitinyl-[E2 ubiquitin-conjugating enzyme]-L-cysteine + [acceptor protein]-L-lysine = [E2 ubiquitin-conjugating enzyme]-L-cysteine + N(6)-ubiquitinyl-[acceptor protein]-L-lysine.. The protein operates within protein modification; protein ubiquitination. E3 ubiquitin-protein ligase which may be involved in endosomal trafficking. E3 ubiquitin ligases accept ubiquitin from an E2 ubiquitin-conjugating enzyme in the form of a thioester and then directly transfer the ubiquitin to targeted substrates. The chain is E3 ubiquitin-protein ligase MARCHF3 (MARCHF3) from Bos taurus (Bovine).